A 591-amino-acid polypeptide reads, in one-letter code: CTP synthase 1-B (591 aa).

In terms of domain architecture, Glutamine amidotransferase type-1 spans 300–554; it reads SIALVGKYTK…LASVGRLSQY (255 aa). Active-site for GATase activity residues include cysteine 399, histidine 526, and glutamate 528. Over residues 562–572 the composition is skewed to basic and acidic residues; the sequence is SPRDTYSDRSE. The interval 562–581 is disordered; that stretch reads SPRDTYSDRSENSSPDAEIA.

It belongs to the CTP synthase family.

It carries out the reaction UTP + L-glutamine + ATP + H2O = CTP + L-glutamate + ADP + phosphate + 2 H(+). It participates in pyrimidine metabolism; CTP biosynthesis via de novo pathway; CTP from UDP: step 2/2. Its function is as follows. This enzyme is involved in the de novo synthesis of CTP, a precursor of DNA, RNA and phospholipids. Catalyzes the ATP-dependent amination of UTP to CTP with either L-glutamine or ammonia as a source of nitrogen. The protein is CTP synthase 1-B (ctps1-b) of Xenopus laevis (African clawed frog).